The primary structure comprises 458 residues: Probable alpha-L-glutamate ligase (458 aa).

The segment at 1–162 (MSDNKFIIGS…YGVKSAKKSG (162 aa)) is unknown. Residues 163–458 (LKIGLLASNP…IEKKLGWKAE (296 aa)) are alpha-L-glutamate ligase. One can recognise an ATP-grasp domain in the interval 267–450 (LQLLQKNNLD…IAGAMIDSIE (184 aa)). Residues Lys304, 341-342 (EF), Asp350, and 374-376 (RAN) each bind ATP. The Mg(2+) site is built by Asp411, Glu423, and Asn425. Residues Asp411, Glu423, and Asn425 each coordinate Mn(2+).

In the C-terminal section; belongs to the RimK family. Mg(2+) is required as a cofactor. It depends on Mn(2+) as a cofactor.

This chain is Probable alpha-L-glutamate ligase, found in Shewanella halifaxensis (strain HAW-EB4).